Reading from the N-terminus, the 383-residue chain is Queuine tRNA-ribosyltransferase (383 aa).

The Proton acceptor role is filled by Asp95. Substrate is bound by residues 95–99, Asp149, Gln195, and Gly222; that span reads DSGGF. The tract at residues 253–259 is RNA binding; the sequence is GVGSPDS. Asp272 acts as the Nucleophile in catalysis. An RNA binding; important for wobble base 34 recognition region spans residues 277-281; the sequence is TRIAR. Zn(2+) is bound by residues Cys310, Cys312, Cys315, and His341.

This sequence belongs to the queuine tRNA-ribosyltransferase family. In terms of assembly, homodimer. Within each dimer, one monomer is responsible for RNA recognition and catalysis, while the other monomer binds to the replacement base PreQ1. Requires Zn(2+) as cofactor.

It catalyses the reaction 7-aminomethyl-7-carbaguanine + guanosine(34) in tRNA = 7-aminomethyl-7-carbaguanosine(34) in tRNA + guanine. Its pathway is tRNA modification; tRNA-queuosine biosynthesis. Catalyzes the base-exchange of a guanine (G) residue with the queuine precursor 7-aminomethyl-7-deazaguanine (PreQ1) at position 34 (anticodon wobble position) in tRNAs with GU(N) anticodons (tRNA-Asp, -Asn, -His and -Tyr). Catalysis occurs through a double-displacement mechanism. The nucleophile active site attacks the C1' of nucleotide 34 to detach the guanine base from the RNA, forming a covalent enzyme-RNA intermediate. The proton acceptor active site deprotonates the incoming PreQ1, allowing a nucleophilic attack on the C1' of the ribose to form the product. After dissociation, two additional enzymatic reactions on the tRNA convert PreQ1 to queuine (Q), resulting in the hypermodified nucleoside queuosine (7-(((4,5-cis-dihydroxy-2-cyclopenten-1-yl)amino)methyl)-7-deazaguanosine). This is Queuine tRNA-ribosyltransferase from Shouchella clausii (strain KSM-K16) (Alkalihalobacillus clausii).